Here is a 180-residue protein sequence, read N- to C-terminus: Large ribosomal subunit protein uL6c (180 aa).

The protein belongs to the universal ribosomal protein uL6 family. As to quaternary structure, part of the 50S ribosomal subunit.

The protein resides in the plastid. Its subcellular location is the chloroplast. In terms of biological role, binds 23S rRNA. In Porphyra purpurea (Red seaweed), this protein is Large ribosomal subunit protein uL6c (rpl6).